The chain runs to 410 residues: 3-phosphoshikimate 1-carboxyvinyltransferase (410 aa).

3 residues coordinate 3-phosphoshikimate: Lys20, Ser21, and Arg25. Lys20 serves as a coordination point for phosphoenolpyruvate. Arg115 lines the phosphoenolpyruvate pocket. 6 residues coordinate 3-phosphoshikimate: Ser157, Ser158, Gln159, Ser183, Asp293, and Lys320. Gln159 is a binding site for phosphoenolpyruvate. Residue Asp293 is the Proton acceptor of the active site. Arg324, Arg365, and Lys391 together coordinate phosphoenolpyruvate.

The protein belongs to the EPSP synthase family. Monomer.

It is found in the cytoplasm. It catalyses the reaction 3-phosphoshikimate + phosphoenolpyruvate = 5-O-(1-carboxyvinyl)-3-phosphoshikimate + phosphate. It participates in metabolic intermediate biosynthesis; chorismate biosynthesis. Functionally, catalyzes the transfer of the enolpyruvyl moiety of phosphoenolpyruvate (PEP) to the 5-hydroxyl of shikimate-3-phosphate (S3P) to produce enolpyruvyl shikimate-3-phosphate and inorganic phosphate. This is 3-phosphoshikimate 1-carboxyvinyltransferase from Thermoplasma acidophilum (strain ATCC 25905 / DSM 1728 / JCM 9062 / NBRC 15155 / AMRC-C165).